The sequence spans 679 residues: Methionine--tRNA ligase (679 aa).

Zn(2+)-binding residues include C147, C150, C160, and C163. The short motif at 332–336 (KISTS) is the 'KMSKS' region element. T335 lines the ATP pocket. The 102-residue stretch at 578–679 (DFMKLDIRVG…REVKPGSEVK (102 aa)) folds into the tRNA-binding domain.

Belongs to the class-I aminoacyl-tRNA synthetase family. MetG type 1 subfamily. In terms of assembly, homodimer. The cofactor is Zn(2+).

Its subcellular location is the cytoplasm. The enzyme catalyses tRNA(Met) + L-methionine + ATP = L-methionyl-tRNA(Met) + AMP + diphosphate. Functionally, is required not only for elongation of protein synthesis but also for the initiation of all mRNA translation through initiator tRNA(fMet) aminoacylation. This chain is Methionine--tRNA ligase, found in Bacteroides fragilis (strain YCH46).